The sequence spans 403 residues: Forkhead box protein Q1 (403 aa).

Disordered regions lie at residues 1 to 75 (MKLE…PGAE) and 94 to 116 (GAAG…PYTR). Positions 32 to 48 (LSAAGDDSLGSDGDCAA) are enriched in low complexity. A compositionally biased stretch (gly residues) spans 96 to 107 (AGPGAGGAGSGE). Residues 119–214 (KPPYSYIALI…ADGVFRRRRK (96 aa)) constitute a DNA-binding region (fork-head). Residues 216–266 (LSHRAPVPAPGLRPEEAPGLPAAPPPAPAAPASPRMRSPARQEERASPAGK) form a disordered region. Positions 236–246 (PAAPPPAPAAP) are enriched in pro residues.

As to expression, expressed predominantly in the stomach, trachea, bladder and salivary gland.

It localises to the nucleus. Functionally, plays a role in hair follicle differentiation. In Homo sapiens (Human), this protein is Forkhead box protein Q1 (FOXQ1).